The following is a 303-amino-acid chain: Methionyl-tRNA formyltransferase (303 aa).

Position 111 to 114 (111 to 114 (SLLP)) interacts with (6S)-5,6,7,8-tetrahydrofolate.

Belongs to the Fmt family.

The enzyme catalyses L-methionyl-tRNA(fMet) + (6R)-10-formyltetrahydrofolate = N-formyl-L-methionyl-tRNA(fMet) + (6S)-5,6,7,8-tetrahydrofolate + H(+). In terms of biological role, attaches a formyl group to the free amino group of methionyl-tRNA(fMet). The formyl group appears to play a dual role in the initiator identity of N-formylmethionyl-tRNA by promoting its recognition by IF2 and preventing the misappropriation of this tRNA by the elongation apparatus. The polypeptide is Methionyl-tRNA formyltransferase (Ehrlichia canis (strain Jake)).